A 156-amino-acid chain; its full sequence is ATP synthase subunit b (156 aa).

A helical membrane pass occupies residues 1–21 (MNVTVTLIGQMVAFGILVWFV).

Belongs to the ATPase B chain family. F-type ATPases have 2 components, F(1) - the catalytic core - and F(0) - the membrane proton channel. F(1) has five subunits: alpha(3), beta(3), gamma(1), delta(1), epsilon(1). F(0) has three main subunits: a(1), b(2) and c(10-14). The alpha and beta chains form an alternating ring which encloses part of the gamma chain. F(1) is attached to F(0) by a central stalk formed by the gamma and epsilon chains, while a peripheral stalk is formed by the delta and b chains.

It localises to the cell inner membrane. Functionally, f(1)F(0) ATP synthase produces ATP from ADP in the presence of a proton or sodium gradient. F-type ATPases consist of two structural domains, F(1) containing the extramembraneous catalytic core and F(0) containing the membrane proton channel, linked together by a central stalk and a peripheral stalk. During catalysis, ATP synthesis in the catalytic domain of F(1) is coupled via a rotary mechanism of the central stalk subunits to proton translocation. In terms of biological role, component of the F(0) channel, it forms part of the peripheral stalk, linking F(1) to F(0). The protein is ATP synthase subunit b of Nitrosococcus oceani (strain ATCC 19707 / BCRC 17464 / JCM 30415 / NCIMB 11848 / C-107).